Consider the following 1020-residue polypeptide: Sodium/potassium-transporting ATPase subunit alpha-2 (1020 aa).

Positions 1–5 (MGRGA) are excised as a propeptide. Positions 1-31 (MGRGAGREYSPAATTAENGGGKKKQKEKELD) are disordered. At 6–85 (GREYSPAATT…NALTPPPTTP (80 aa)) the chain is on the cytoplasmic side. Residue serine 10 is modified to Phosphoserine. The interval 80–82 (PPP) is interaction with phosphoinositide-3 kinase. The chain crosses the membrane as a helical span at residues 86 to 106 (EWVKFCRQLFGGFSILLWIGA). Topologically, residues 107–129 (ILCFLAYGIQAAMEDEPSNDNLY) are extracellular. A helical transmembrane segment spans residues 130-150 (LGVVLAAVVIVTGCFSYYQEA). Over 151–286 (KSSKIMDSFK…VGRTPIAMEI (136 aa)) the chain is Cytoplasmic. A compositionally biased stretch (polar residues) spans 212-227 (DNSSLTGESEPQTRSP). Residues 212-231 (DNSSLTGESEPQTRSPEFTH) are disordered. Residues 287–306 (EHFIQLITGVAVFLGVSFFV) traverse the membrane as a helical segment. Over 307–318 (LSLILGYSWLEA) the chain is Extracellular. Residues 319-336 (VIFLIGIIVANVPEGLLA) form a helical membrane-spanning segment. The Cytoplasmic segment spans residues 337–769 (TVTVCLTLTA…EEGRLIFDNL (433 aa)). Aspartate 374 (4-aspartylphosphate intermediate) is an active-site residue. Phosphoserine occurs at positions 439, 450, 496, and 559. A Phosphothreonine modification is found at threonine 570. 2 positions are modified to phosphoserine: serine 587 and serine 672. The Mg(2+) site is built by aspartate 714 and aspartate 718. Residues 770–789 (KKSIAYTLTSNIPEITPFLL) form a helical membrane-spanning segment. The Extracellular segment spans residues 790–799 (FIIANIPLPL). The helical transmembrane segment at 800–820 (GTVTILCIDLGTDMVPAISLA) threads the bilayer. The Cytoplasmic segment spans residues 821-840 (YEAAESDIMKRQPRNSQTDK). Serine 826 bears the Phosphoserine mark. Residues 841 to 863 (LVNERLISMAYGQIGMIQALGGF) traverse the membrane as a helical segment. At 864–915 (FTYFVILAENGFLPSRLLGIRLDWDDRTMNDLEDSYGQEWTYEQRKVVEFTC) the chain is on the extracellular side. A helical transmembrane segment spans residues 916 to 935 (HTAFFASIVVVQWADLIICK). Topologically, residues 936–948 (TRRNSVFQQGMKN) are cytoplasmic. The residue at position 940 (serine 940) is a Phosphoserine; by PKA. Residues 949 to 967 (KILIFGLLEETALAAFLSY) traverse the membrane as a helical segment. The Extracellular segment spans residues 968-982 (CPGMGVALRMYPLKV). Residues 983–1003 (TWWFCAFPYSLLIFIYDEVRK) form a helical membrane-spanning segment. Topologically, residues 1004-1020 (LILRRYPGGWVEKETYY) are cytoplasmic.

The protein belongs to the cation transport ATPase (P-type) (TC 3.A.3) family. Type IIC subfamily. In terms of assembly, the sodium/potassium-transporting ATPase is composed of a catalytic alpha subunit, an auxiliary non-catalytic beta subunit and an additional regulatory subunit. Interacts with regulatory subunit FXYD1.

The protein resides in the membrane. The protein localises to the cell membrane. It carries out the reaction K(+)(out) + Na(+)(in) + ATP + H2O = K(+)(in) + Na(+)(out) + ADP + phosphate + H(+). Functionally, this is the catalytic component of the active enzyme, which catalyzes the hydrolysis of ATP coupled with the exchange of sodium and potassium ions across the plasma membrane. This action creates the electrochemical gradient of sodium and potassium, providing the energy for active transport of various nutrients. The polypeptide is Sodium/potassium-transporting ATPase subunit alpha-2 (ATP1A2) (Homo sapiens (Human)).